The primary structure comprises 283 residues: Formamidopyrimidine-DNA glycosylase (283 aa).

Catalysis depends on Pro2, which acts as the Schiff-base intermediate with DNA. Glu3 (proton donor) is an active-site residue. Lys58 acts as the Proton donor; for beta-elimination activity in catalysis. Positions 100, 119, and 162 each coordinate DNA. An FPG-type zinc finger spans residues 247–283 (RVYGREGLPCVTPGCSGTVGRIVQSGRSSFHCPLCQR). Catalysis depends on Arg273, which acts as the Proton donor; for delta-elimination activity.

This sequence belongs to the FPG family. Monomer. Zn(2+) serves as cofactor.

The catalysed reaction is Hydrolysis of DNA containing ring-opened 7-methylguanine residues, releasing 2,6-diamino-4-hydroxy-5-(N-methyl)formamidopyrimidine.. It carries out the reaction 2'-deoxyribonucleotide-(2'-deoxyribose 5'-phosphate)-2'-deoxyribonucleotide-DNA = a 3'-end 2'-deoxyribonucleotide-(2,3-dehydro-2,3-deoxyribose 5'-phosphate)-DNA + a 5'-end 5'-phospho-2'-deoxyribonucleoside-DNA + H(+). Its function is as follows. Involved in base excision repair of DNA damaged by oxidation or by mutagenic agents. Acts as a DNA glycosylase that recognizes and removes damaged bases. Has a preference for oxidized purines, such as 7,8-dihydro-8-oxoguanine (8-oxoG). Has AP (apurinic/apyrimidinic) lyase activity and introduces nicks in the DNA strand. Cleaves the DNA backbone by beta-delta elimination to generate a single-strand break at the site of the removed base with both 3'- and 5'-phosphates. The sequence is that of Formamidopyrimidine-DNA glycosylase from Cereibacter sphaeroides (strain ATCC 17029 / ATH 2.4.9) (Rhodobacter sphaeroides).